The following is a 527-amino-acid chain: MRSDKSALVFLLLQLFCVGCGFCGKVLVWPCDMSHWLNVKVILEELIVRGHEVTVLTHSKPSLIDYRKPSALKFEVVHMPQDRTEENEIFVDLALNVLPGLSTWQSVIKLNDFFVEIRGTLKMMCESFIYNQTLMKKLQETNYDVMLIDPVIPCGDLMAELLAVPFVLTLRISVGGNMERSCGKLPAPLSYVPVPMTGLTDRMTFLERVKNSMLSVLFHFWIQDYDYHFWEEFYSKALGRPTTLCETVGKAEIWLIRTYWDFEFPQPYQPNFEFVGGLHCKPAKALPKEMENFVQSSGEDGIVVFSLGSLFQNVTEEKANIIASALAQIPQKVLWRYKGKKPSTLGANTRLYDWIPQNDLLGHPKTKAFITHGGMNGIYEAIYHGVPMVGVPIFGDQLDNIAHMKAKGAAVEINFKTMTSEDLLRALRTVITDSSYKENAMRLSRIHHDQPVKPLDRAVFWIEFVMRHKGAKHLRSAAHDLTWFQHYSIDVIGFLLACVATAIFLFTKCFLFSCQKFNKTRKIEKRE.

The N-terminal stretch at M1–C23 is a signal peptide. Over G24–V491 the chain is Extracellular. The N-linked (GlcNAc...) asparagine glycan is linked to N313. Residues I492–F512 traverse the membrane as a helical segment. The Cytoplasmic portion of the chain corresponds to S513–E527.

It belongs to the UDP-glycosyltransferase family.

It is found in the membrane. It carries out the reaction glucuronate acceptor + UDP-alpha-D-glucuronate = acceptor beta-D-glucuronoside + UDP + H(+). In terms of biological role, UDP-glucuronosyltransferases catalyze phase II biotransformation reactions in which lipophilic substrates are conjugated with glucuronic acid to increase water solubility and enhance excretion. They are of major importance in the conjugation and subsequent elimination of potentially toxic xenobiotics and endogenous compounds. In Homo sapiens (Human), this protein is UDP-glucuronosyltransferase 2A3 (UGT2A3).